The chain runs to 469 residues: tRNA(Ile)-lysidine synthase (469 aa).

Position 26 to 31 (26 to 31) interacts with ATP; the sequence is SGGPDS.

This sequence belongs to the tRNA(Ile)-lysidine synthase family.

The protein resides in the cytoplasm. It catalyses the reaction cytidine(34) in tRNA(Ile2) + L-lysine + ATP = lysidine(34) in tRNA(Ile2) + AMP + diphosphate + H(+). In terms of biological role, ligates lysine onto the cytidine present at position 34 of the AUA codon-specific tRNA(Ile) that contains the anticodon CAU, in an ATP-dependent manner. Cytidine is converted to lysidine, thus changing the amino acid specificity of the tRNA from methionine to isoleucine. The protein is tRNA(Ile)-lysidine synthase of Shouchella clausii (strain KSM-K16) (Alkalihalobacillus clausii).